Reading from the N-terminus, the 542-residue chain is Hydroxylamine reductase (542 aa).

The [4Fe-4S] cluster site is built by Cys-5, Cys-8, Cys-17, and Cys-23. Hybrid [4Fe-2O-2S] cluster is bound by residues His-237, Glu-261, Cys-305, Cys-397, Cys-425, Cys-450, Glu-485, and Lys-487. Cys-397 carries the post-translational modification Cysteine persulfide.

The protein belongs to the HCP family. The cofactor is [4Fe-4S] cluster. Hybrid [4Fe-2O-2S] cluster is required as a cofactor.

It is found in the cytoplasm. The catalysed reaction is A + NH4(+) + H2O = hydroxylamine + AH2 + H(+). In terms of biological role, catalyzes the reduction of hydroxylamine to form NH(3) and H(2)O. The polypeptide is Hydroxylamine reductase (Acetivibrio thermocellus (strain ATCC 27405 / DSM 1237 / JCM 9322 / NBRC 103400 / NCIMB 10682 / NRRL B-4536 / VPI 7372) (Clostridium thermocellum)).